Reading from the N-terminus, the 253-residue chain is MGGSESTGRKVSFGMDEEERVRVLRGVRLSDEVVNRMKDSDLPSKDQSTSAASGTASAPAAFPSKAGPSASHPASTSTGGAHKPTAAGVGQQYAEEDLYRRYEREQAIIQEELARLAKRERESAHEKLSASILLEKNSTNQERRKAEHLAKELEQKEAELQRLNTFYREQLSSIEKKNLEIYRLTAEQYHTAATNAELRVRQRSYDPVCMNLQADILKCYSENKQERLNCSNLAKEYRKCVSAAQKNLLFNHG.

The tract at residues 1–89 is disordered; sequence MGGSESTGRK…GAHKPTAAGV (89 aa). Gly2 carries N-myristoyl glycine lipidation. Positions 28-44 are enriched in basic and acidic residues; sequence RLSDEVVNRMKDSDLPS. Over residues 48-64 the composition is skewed to low complexity; the sequence is STSAASGTASAPAAFPS. Residues 94-178 adopt a coiled-coil conformation; sequence AEEDLYRRYE…EQLSSIEKKN (85 aa). The 43-residue stretch at 206 to 248 folds into the CHCH domain; it reads DPVCMNLQADILKCYSENKQERLNCSNLAKEYRKCVSAAQKNL. Short sequence motifs (cx9C motif) lie at residues 209–219 and 230–240; these read CMNLQADILKC and CSNLAKEYRKC. Disulfide bonds link Cys209–Cys240 and Cys219–Cys230.

This sequence belongs to the MICOS complex subunit Mic19 family. Metazoan Mic25 subfamily. Component of the mitochondrial contact site and cristae organizing system (MICOS) complex (also known as MINOS or MitOS complex).

The protein localises to the mitochondrion inner membrane. Its function is as follows. Component of the MICOS complex, a large protein complex of the mitochondrial inner membrane that plays crucial roles in the maintenance of crista junctions, inner membrane architecture, and formation of contact sites to the outer membrane. The sequence is that of MICOS complex subunit mic25 (chchd6) from Xenopus tropicalis (Western clawed frog).